The sequence spans 440 residues: Transposon Ty1-OL Gag polyprotein (440 aa).

Polar residues-rich tracts occupy residues 1–23 (MESQQLSNYPQISHGSACASVTS), 48–60 (TKANSQQTTTPAS), and 127–152 (QSQFPQYPSSVGTPLSTPSPESGNTF). Disordered stretches follow at residues 1-93 (MESQ…MMTQ), 126-173 (PQSQ…RPPP), and 352-440 (GSRN…PGTY). Low complexity predominate over residues 153-165 (TDSSSADSDMTST). Residues 299–401 (NNGIHINNKV…NSKSKTARAH (103 aa)) are RNA-binding. A compositionally biased stretch (low complexity) spans 402 to 418 (NVSTSNNSPSTDNDSIS). The residue at position 416 (Ser416) is a Phosphoserine. Polar residues predominate over residues 419–428 (KSTTEPIQLN). Residues 429–440 (NKHDLHLRPGTY) are compositionally biased toward basic and acidic residues.

As to quaternary structure, homotrimer.

The protein resides in the cytoplasm. Capsid protein (CA) is the structural component of the virus-like particle (VLP), forming the shell that encapsulates the retrotransposons dimeric RNA genome. The particles are assembled from trimer-clustered units and there are holes in the capsid shells that allow for the diffusion of macromolecules. CA also has nucleocapsid-like chaperone activity, promoting primer tRNA(i)-Met annealing to the multipartite primer-binding site (PBS), dimerization of Ty1 RNA and initiation of reverse transcription. This chain is Transposon Ty1-OL Gag polyprotein (TY1A-OL), found in Saccharomyces cerevisiae (strain ATCC 204508 / S288c) (Baker's yeast).